A 575-amino-acid polypeptide reads, in one-letter code: Intermediate filament protein ifa-1 (575 aa).

Disordered stretches follow at residues 1–30 (MMEI…TGNV) and 45–72 (SGAG…EKKE). Positions 1–72 (MMEITRETMS…RDSREREKKE (72 aa)) are head. The span at 7–17 (ETMSFTSTTPS) shows a compositional bias: polar residues. A compositionally biased stretch (basic and acidic residues) spans 63–72 (RDSREREKKE). The 354-residue stretch at 69–422 (EKKEMSDLND…KMLEGEENRA (354 aa)) folds into the IF rod domain. The tract at residues 73 to 104 (MSDLNDRLASYIEKVRFLEAQNRKLAADLDAL) is coil 1A. The segment at 105-118 (RSKWGKDTHNIRNM) is linker 1. The tract at residues 119–256 (YEGELVDAQK…RVHDNEIKEL (138 aa)) is coil 1B. Residues 257–274 (QTLASRDTTPENREFFKN) form a linker 12 region. Positions 275–422 (ELSSAIRDIR…KMLEGEENRA (148 aa)) are coil 2. The tail stretch occupies residues 423–572 (GLKQLVEQVV…EERATHIQRQ (150 aa)). One can recognise an LTD domain in the interval 455–572 (SRQSFQRSAK…EERATHIQRQ (118 aa)).

Belongs to the intermediate filament family. Forms some heteromeric filaments with ifb-1. Isoform d is abundantly expressed in the marginal cells of the pharynx, forming apicobasally oriented thick filament bundles that are attached to the apical and basal plasma membrane by hemi-adherens junctions. Expression of isoform c is also seen in the excretory cells and in the uterus. Isoform c is detectable in the amphid sensory neurins and the pharyngeal-intestinal valve. Both isoform c and isoform d are expressed in the rectum and vulva and in some neurons of the tail. In larvae, expression is seen in the excretory cell, the vulva, the rectum and in the thick filament bundles of the pharynx. Expression in pharynx begins in late embryos.

The protein resides in the cytoplasm. Cytoplasmic intermediate filaments make up the structural component of the cytoskeleton providing mechanical strength to cells. Essential protein required during embryogenesis especially for survival past the L1 larva stage, involved in intestine morphogenesis. This Caenorhabditis elegans protein is Intermediate filament protein ifa-1 (ifa-1).